We begin with the raw amino-acid sequence, 185 residues long: Tetratricopeptide repeat protein 36 homolog (185 aa).

TPR repeat units lie at residues Ser-53 to Ala-86, Val-88 to Gln-119, and Cys-125 to Phe-158.

Belongs to the TTC36 family.

In Drosophila pseudoobscura pseudoobscura (Fruit fly), this protein is Tetratricopeptide repeat protein 36 homolog.